Here is a 691-residue protein sequence, read N- to C-terminus: Elongation factor G (691 aa).

Residues 12–286 form the tr-type G domain; that stretch reads KKLRNIGIMA…GVLEYLPSPL (275 aa). GTP-binding positions include 21 to 28, 85 to 89, and 139 to 142; these read AHIDAGKT, DTPGH, and NKMD.

It belongs to the TRAFAC class translation factor GTPase superfamily. Classic translation factor GTPase family. EF-G/EF-2 subfamily.

It localises to the cytoplasm. Catalyzes the GTP-dependent ribosomal translocation step during translation elongation. During this step, the ribosome changes from the pre-translocational (PRE) to the post-translocational (POST) state as the newly formed A-site-bound peptidyl-tRNA and P-site-bound deacylated tRNA move to the P and E sites, respectively. Catalyzes the coordinated movement of the two tRNA molecules, the mRNA and conformational changes in the ribosome. The protein is Elongation factor G of Thermosipho melanesiensis (strain DSM 12029 / CIP 104789 / BI429).